The chain runs to 689 residues: Glycine--tRNA ligase beta subunit (689 aa).

Belongs to the class-II aminoacyl-tRNA synthetase family. As to quaternary structure, tetramer of two alpha and two beta subunits.

The protein localises to the cytoplasm. It carries out the reaction tRNA(Gly) + glycine + ATP = glycyl-tRNA(Gly) + AMP + diphosphate. The protein is Glycine--tRNA ligase beta subunit of Salmonella choleraesuis (strain SC-B67).